We begin with the raw amino-acid sequence, 339 residues long: Ketol-acid reductoisomerase (NADP(+)) (339 aa).

The region spanning 1–182 (MRVYYDRDAD…GGGRAGIIET (182 aa)) is the KARI N-terminal Rossmann domain. NADP(+) is bound by residues 24 to 27 (YGSQ), arginine 48, serine 51, serine 53, and 83 to 86 (DELQ). Histidine 108 is a catalytic residue. Glycine 134 contacts NADP(+). A KARI C-terminal knotted domain is found at 183–328 (SFREETETDL…ARLRDMMPWI (146 aa)). Mg(2+) contacts are provided by aspartate 191, glutamate 195, glutamate 227, and glutamate 231. Substrate is bound at residue serine 252.

Belongs to the ketol-acid reductoisomerase family. Requires Mg(2+) as cofactor.

It carries out the reaction (2R)-2,3-dihydroxy-3-methylbutanoate + NADP(+) = (2S)-2-acetolactate + NADPH + H(+). The catalysed reaction is (2R,3R)-2,3-dihydroxy-3-methylpentanoate + NADP(+) = (S)-2-ethyl-2-hydroxy-3-oxobutanoate + NADPH + H(+). It functions in the pathway amino-acid biosynthesis; L-isoleucine biosynthesis; L-isoleucine from 2-oxobutanoate: step 2/4. It participates in amino-acid biosynthesis; L-valine biosynthesis; L-valine from pyruvate: step 2/4. Involved in the biosynthesis of branched-chain amino acids (BCAA). Catalyzes an alkyl-migration followed by a ketol-acid reduction of (S)-2-acetolactate (S2AL) to yield (R)-2,3-dihydroxy-isovalerate. In the isomerase reaction, S2AL is rearranged via a Mg-dependent methyl migration to produce 3-hydroxy-3-methyl-2-ketobutyrate (HMKB). In the reductase reaction, this 2-ketoacid undergoes a metal-dependent reduction by NADPH to yield (R)-2,3-dihydroxy-isovalerate. The chain is Ketol-acid reductoisomerase (NADP(+)) from Afipia carboxidovorans (strain ATCC 49405 / DSM 1227 / KCTC 32145 / OM5) (Oligotropha carboxidovorans).